A 286-amino-acid chain; its full sequence is Shikimate dehydrogenase (NADP(+)) (286 aa).

Residues 19–21 (SVS) and Thr-66 contribute to the shikimate site. Lys-70 functions as the Proton acceptor in the catalytic mechanism. Shikimate contacts are provided by Asn-91 and Asp-106. Residues 130–134 (GAGGS) and Ala-225 contribute to the NADP(+) site. Residue Tyr-227 coordinates shikimate. Gly-248 is a binding site for NADP(+).

The protein belongs to the shikimate dehydrogenase family. As to quaternary structure, homodimer.

It carries out the reaction shikimate + NADP(+) = 3-dehydroshikimate + NADPH + H(+). It participates in metabolic intermediate biosynthesis; chorismate biosynthesis; chorismate from D-erythrose 4-phosphate and phosphoenolpyruvate: step 4/7. Involved in the biosynthesis of the chorismate, which leads to the biosynthesis of aromatic amino acids. Catalyzes the reversible NADPH linked reduction of 3-dehydroshikimate (DHSA) to yield shikimate (SA). This chain is Shikimate dehydrogenase (NADP(+)), found in Dehalococcoides mccartyi (strain ATCC BAA-2100 / JCM 16839 / KCTC 5957 / BAV1).